Here is a 465-residue protein sequence, read N- to C-terminus: Ribulose bisphosphate carboxylase large chain (465 aa).

Position 4 is an N6,N6,N6-trimethyllysine (Lys-4). Residues Asn-113 and Thr-163 each coordinate substrate. Lys-165 serves as the catalytic Proton acceptor. Residue Lys-167 participates in substrate binding. Positions 191, 193, and 194 each coordinate Mg(2+). Lys-191 bears the N6-carboxylysine mark. His-284 (proton acceptor) is an active-site residue. Substrate is bound by residues Arg-285, His-317, and Ser-369.

This sequence belongs to the RuBisCO large chain family. Type I subfamily. In terms of assembly, heterohexadecamer of 8 large chains and 8 small chains; disulfide-linked. The disulfide link is formed within the large subunit homodimers. Mg(2+) serves as cofactor. Post-translationally, the disulfide bond which can form in the large chain dimeric partners within the hexadecamer appears to be associated with oxidative stress and protein turnover.

The protein localises to the plastid. The protein resides in the chloroplast. It carries out the reaction 2 (2R)-3-phosphoglycerate + 2 H(+) = D-ribulose 1,5-bisphosphate + CO2 + H2O. It catalyses the reaction D-ribulose 1,5-bisphosphate + O2 = 2-phosphoglycolate + (2R)-3-phosphoglycerate + 2 H(+). In terms of biological role, ruBisCO catalyzes two reactions: the carboxylation of D-ribulose 1,5-bisphosphate, the primary event in carbon dioxide fixation, as well as the oxidative fragmentation of the pentose substrate in the photorespiration process. Both reactions occur simultaneously and in competition at the same active site. The sequence is that of Ribulose bisphosphate carboxylase large chain from Clitoria ternatea (Butterfly pea).